The following is a 356-amino-acid chain: Peptide chain release factor 1 (356 aa).

Position 233 is an N5-methylglutamine (Gln233).

It belongs to the prokaryotic/mitochondrial release factor family. Post-translationally, methylated by PrmC. Methylation increases the termination efficiency of RF1.

Its subcellular location is the cytoplasm. Peptide chain release factor 1 directs the termination of translation in response to the peptide chain termination codons UAG and UAA. This Halalkalibacterium halodurans (strain ATCC BAA-125 / DSM 18197 / FERM 7344 / JCM 9153 / C-125) (Bacillus halodurans) protein is Peptide chain release factor 1.